The primary structure comprises 73 residues: MKKILSYLLLLPVYFYRGYISPMTPPSCRFVPTCSEYAIEAIKKHGPFKGLYLAVRRILRCHPWGGSGYDPVP.

The protein belongs to the UPF0161 family.

It localises to the cell inner membrane. Could be involved in insertion of integral membrane proteins into the membrane. The protein is Putative membrane protein insertion efficiency factor of Phocaeicola vulgatus (strain ATCC 8482 / DSM 1447 / JCM 5826 / CCUG 4940 / NBRC 14291 / NCTC 11154) (Bacteroides vulgatus).